A 324-amino-acid polypeptide reads, in one-letter code: Myoblast determination protein 1 homolog (324 aa).

Positions 125–146 (VDSQHEDTTTSTAGGAGVGGPR) are disordered. The 52-residue stretch at 155–206 (DRRKAATMRERRRLRKVNEAFEVVKQRTCPNPNQRLPKVEILRSAIDYINNL) folds into the bHLH domain. The segment at 251–272 (YNPENMFDDDDLTDSDDDRDHH) is disordered. Residues 256–267 (MFDDDDLTDSDD) are compositionally biased toward acidic residues.

As to quaternary structure, efficient DNA binding requires dimerization with another bHLH protein. In terms of tissue distribution, body wall muscle cells; in clonal muscle precursors, in a set of early embryonic blastomeres (the ms-granddaughters), and in six glial-like cells called GLRS.

The protein resides in the nucleus. Involved in myogenesis, in cooperation with transcription factors unc-120 and hnd-1. Acts redundantly with fozi-1 to promote body wall muscle cell and coelomocyte specification in postembryonic mesoderm progenitors, probably through suppression of sem-2. The chain is Myoblast determination protein 1 homolog from Caenorhabditis elegans.